A 72-amino-acid polypeptide reads, in one-letter code: Large ribosomal subunit protein bL28 (72 aa).

Belongs to the bacterial ribosomal protein bL28 family.

In Chlorobium phaeovibrioides (strain DSM 265 / 1930) (Prosthecochloris vibrioformis (strain DSM 265)), this protein is Large ribosomal subunit protein bL28.